We begin with the raw amino-acid sequence, 281 residues long: Probable endonuclease 4 (281 aa).

Residues His69, His109, Glu145, Asp179, His182, His216, Asp229, His231, and Glu261 each contribute to the Zn(2+) site.

It belongs to the AP endonuclease 2 family. It depends on Zn(2+) as a cofactor.

It carries out the reaction Endonucleolytic cleavage to 5'-phosphooligonucleotide end-products.. Its function is as follows. Endonuclease IV plays a role in DNA repair. It cleaves phosphodiester bonds at apurinic or apyrimidinic (AP) sites, generating a 3'-hydroxyl group and a 5'-terminal sugar phosphate. In Buchnera aphidicola subsp. Acyrthosiphon pisum (strain APS) (Acyrthosiphon pisum symbiotic bacterium), this protein is Probable endonuclease 4.